A 151-amino-acid chain; its full sequence is Large-conductance mechanosensitive channel (151 aa).

Transmembrane regions (helical) follow at residues 19–39 and 85–105; these read VGII…GDVL and GLFI…FFLV.

It belongs to the MscL family. As to quaternary structure, homopentamer.

The protein resides in the cell inner membrane. Functionally, channel that opens in response to stretch forces in the membrane lipid bilayer. May participate in the regulation of osmotic pressure changes within the cell. This Chlorobaculum parvum (strain DSM 263 / NCIMB 8327) (Chlorobium vibrioforme subsp. thiosulfatophilum) protein is Large-conductance mechanosensitive channel.